Reading from the N-terminus, the 201-residue chain is Recombination protein RecR (201 aa).

Residues 60–75 (CKYCQSLTEKDVCDIC) form a C4-type zinc finger. The region spanning 83 to 177 (SKLCIIESML…KISRIGFGVP (95 aa)) is the Toprim domain.

It belongs to the RecR family.

Its function is as follows. May play a role in DNA repair. It seems to be involved in an RecBC-independent recombinational process of DNA repair. It may act with RecF and RecO. This is Recombination protein RecR from Francisella philomiragia subsp. philomiragia (strain ATCC 25017 / CCUG 19701 / FSC 153 / O#319-036).